The chain runs to 216 residues: Peptide methionine sulfoxide reductase MsrA (216 aa).

Cys54 is an active-site residue.

This sequence belongs to the MsrA Met sulfoxide reductase family.

It carries out the reaction L-methionyl-[protein] + [thioredoxin]-disulfide + H2O = L-methionyl-(S)-S-oxide-[protein] + [thioredoxin]-dithiol. The enzyme catalyses [thioredoxin]-disulfide + L-methionine + H2O = L-methionine (S)-S-oxide + [thioredoxin]-dithiol. Has an important function as a repair enzyme for proteins that have been inactivated by oxidation. Catalyzes the reversible oxidation-reduction of methionine sulfoxide in proteins to methionine. In Xanthomonas campestris pv. campestris (strain ATCC 33913 / DSM 3586 / NCPPB 528 / LMG 568 / P 25), this protein is Peptide methionine sulfoxide reductase MsrA.